Consider the following 468-residue polypeptide: Sushi repeat-containing protein SRPX2 (468 aa).

The N-terminal stretch at 1-25 (MMTSPLTQRGALSLLLLLMPAVTPT) is a signal peptide. 3 Sushi domains span residues 72–122 (ATCY…YCRQ), 123–181 (IRCH…VCVD), and 265–324 (RRCP…VCTP). Intrachain disulfides connect Cys74-Cys108, Cys94-Cys120, Cys125-Cys166, and Cys152-Cys179. Residues 180-264 (VDIDPPKIRC…SCKFIVKVQV (85 aa)) enclose the HYR domain. 2 cysteine pairs are disulfide-bonded: Cys267–Cys309 and Cys295–Cys322.

As to quaternary structure, forms homooligomers. Interacts with PLAUR (via the UPAR/Ly6 domains), ADAMTS4 and CTSB. Interacts with HGF; the interaction increases the mitogenic activity of HGF. Contains chondroitin sulfate chains. In terms of tissue distribution, expressed in angiogenic endothelial cells (at protein level).

The protein resides in the secreted. It is found in the cytoplasm. The protein localises to the cell surface. Its subcellular location is the synapse. In terms of biological role, acts as a ligand for the urokinase plasminogen activator surface receptor. Plays a role in angiogenesis by inducing endothelial cell migration and the formation of vascular network (cords). Involved in cellular migration and adhesion. Increases the phosphorylation levels of FAK. Interacts with and increases the mitogenic activity of HGF. Promotes synapse formation. Required for ultrasonic vocalizations. This is Sushi repeat-containing protein SRPX2 (Srpx2) from Mus musculus (Mouse).